The primary structure comprises 134 residues: Arsenate reductase (134 aa).

Active-site nucleophile residues include Cys11, Cys83, and Cys90. Disulfide bonds link Cys11/Cys83 and Cys83/Cys90.

Belongs to the low molecular weight phosphotyrosine protein phosphatase family. Thioredoxin-coupled ArsC subfamily.

It is found in the cytoplasm. It carries out the reaction arsenate + [thioredoxin]-dithiol + H(+) = arsenite + [thioredoxin]-disulfide + H2O. Catalyzes the reduction of arsenate [As(V)] to arsenite [As(III)]. The polypeptide is Arsenate reductase (Bacillus cereus (strain AH187)).